Here is a 754-residue protein sequence, read N- to C-terminus: 5-methyltetrahydropteroyltriglutamate--homocysteine methyltransferase (754 aa).

Residues 16-19 (RELK) and Lys114 contribute to the 5-methyltetrahydropteroyltri-L-glutamate site. Residues 430–432 (IGS) and Glu483 each bind L-homocysteine. Residues 430–432 (IGS) and Glu483 each bind L-methionine. 5-methyltetrahydropteroyltri-L-glutamate is bound by residues 514–515 (RC) and Trp560. Asp598 is an L-homocysteine binding site. Asp598 lines the L-methionine pocket. Residue Glu604 coordinates 5-methyltetrahydropteroyltri-L-glutamate. 3 residues coordinate Zn(2+): His640, Cys642, and Glu664. Residue His693 is the Proton donor of the active site. Residue Cys725 coordinates Zn(2+).

This sequence belongs to the vitamin-B12 independent methionine synthase family. Requires Zn(2+) as cofactor.

The catalysed reaction is 5-methyltetrahydropteroyltri-L-glutamate + L-homocysteine = tetrahydropteroyltri-L-glutamate + L-methionine. The protein operates within amino-acid biosynthesis; L-methionine biosynthesis via de novo pathway; L-methionine from L-homocysteine (MetE route): step 1/1. Catalyzes the transfer of a methyl group from 5-methyltetrahydrofolate to homocysteine resulting in methionine formation. This chain is 5-methyltetrahydropteroyltriglutamate--homocysteine methyltransferase, found in Aeromonas salmonicida (strain A449).